We begin with the raw amino-acid sequence, 529 residues long: Bifunctional purine biosynthesis protein PurH (529 aa).

In terms of domain architecture, MGS-like spans 1-148 (MQQRRPVRRA…KNHKDVAIVV (148 aa)).

This sequence belongs to the PurH family.

The catalysed reaction is (6R)-10-formyltetrahydrofolate + 5-amino-1-(5-phospho-beta-D-ribosyl)imidazole-4-carboxamide = 5-formamido-1-(5-phospho-D-ribosyl)imidazole-4-carboxamide + (6S)-5,6,7,8-tetrahydrofolate. It carries out the reaction IMP + H2O = 5-formamido-1-(5-phospho-D-ribosyl)imidazole-4-carboxamide. It participates in purine metabolism; IMP biosynthesis via de novo pathway; 5-formamido-1-(5-phospho-D-ribosyl)imidazole-4-carboxamide from 5-amino-1-(5-phospho-D-ribosyl)imidazole-4-carboxamide (10-formyl THF route): step 1/1. It functions in the pathway purine metabolism; IMP biosynthesis via de novo pathway; IMP from 5-formamido-1-(5-phospho-D-ribosyl)imidazole-4-carboxamide: step 1/1. In Salmonella schwarzengrund (strain CVM19633), this protein is Bifunctional purine biosynthesis protein PurH.